The primary structure comprises 136 residues: MGKFMKPGKVVMVLAGRYAGRKAVIVKNIDDGTADRPYSHALVAGIDRYPRKVTATMGKKKIAKRSKIKAFVKVFNYNHLMPTRYSVDIPLDKTVVNKDVFRDPALKRKARREAKVKFEERYKTGKNKWFFQKLRF.

In terms of domain architecture, KOW spans 5-40 (MKPGKVVMVLAGRYAGRKAVIVKNIDDGTADRPYSH).

Belongs to the eukaryotic ribosomal protein eL27 family. In terms of assembly, component of the large ribosomal subunit.

Its subcellular location is the cytoplasm. The protein resides in the cytosol. It localises to the rough endoplasmic reticulum. In terms of biological role, component of the large ribosomal subunit. The protein is Large ribosomal subunit protein eL27 (rpl27) of Danio rerio (Zebrafish).